Here is a 1092-residue protein sequence, read N- to C-terminus: Isoleucine--tRNA ligase (1092 aa).

The 'HIGH' region signature appears at 53-63 (PFANGLPHYGH). The 'KMSKS' region signature appears at 613 to 617 (KLSKR). An ATP-binding site is contributed by lysine 616.

This sequence belongs to the class-I aminoacyl-tRNA synthetase family. IleS type 2 subfamily. Monomer. It depends on Zn(2+) as a cofactor.

The protein resides in the cytoplasm. It catalyses the reaction tRNA(Ile) + L-isoleucine + ATP = L-isoleucyl-tRNA(Ile) + AMP + diphosphate. Catalyzes the attachment of isoleucine to tRNA(Ile). As IleRS can inadvertently accommodate and process structurally similar amino acids such as valine, to avoid such errors it has two additional distinct tRNA(Ile)-dependent editing activities. One activity is designated as 'pretransfer' editing and involves the hydrolysis of activated Val-AMP. The other activity is designated 'posttransfer' editing and involves deacylation of mischarged Val-tRNA(Ile). This Rickettsia africae (strain ESF-5) protein is Isoleucine--tRNA ligase.